A 231-amino-acid chain; its full sequence is F-box protein SKIP8 (231 aa).

Residues 1-24 form a disordered region; the sequence is MPSTPLANGGTPPMGGGERTTVTT. The 47-residue stretch at 34–80 folds into the F-box domain; sequence VSMMEQLVPEITTHALSYLDYPSLCRLSMTNSLMRKAANDDNAWKAL.

Part of a SCF (ASK-cullin-F-box) protein ligase complex. Interacts with SKP1A/ASK1.

Its pathway is protein modification; protein ubiquitination. Component of SCF(ASK-cullin-F-box) E3 ubiquitin ligase complexes, which may mediate the ubiquitination and subsequent proteasomal degradation of target proteins. This Arabidopsis thaliana (Mouse-ear cress) protein is F-box protein SKIP8 (SKIP8).